The chain runs to 161 residues: uncharacterized protein (161 aa).

Interacts with ribosomes.

This is an uncharacterized protein from Saccharomyces cerevisiae (strain ATCC 204508 / S288c) (Baker's yeast).